A 79-amino-acid polypeptide reads, in one-letter code: Sec-independent protein translocase protein TatA (79 aa).

The chain crosses the membrane as a helical span at residues methionine 1–glycine 21. A compositionally biased stretch (basic and acidic residues) spans leucine 43–aspartate 60. A disordered region spans residues leucine 43–valine 79.

This sequence belongs to the TatA/E family. As to quaternary structure, the Tat system comprises two distinct complexes: a TatABC complex, containing multiple copies of TatA, TatB and TatC subunits, and a separate TatA complex, containing only TatA subunits. Substrates initially bind to the TatABC complex, which probably triggers association of the separate TatA complex to form the active translocon.

Its subcellular location is the cell inner membrane. Part of the twin-arginine translocation (Tat) system that transports large folded proteins containing a characteristic twin-arginine motif in their signal peptide across membranes. TatA could form the protein-conducting channel of the Tat system. The sequence is that of Sec-independent protein translocase protein TatA from Rhodopseudomonas palustris (strain BisB5).